The primary structure comprises 589 residues: Cyclohexane-1,2-dione hydrolase (589 aa).

Glu52 provides a ligand contact to thiamine diphosphate. The interval 400–480 (NHTLPMFGGA…VITMVFTNES (81 aa)) is thiamine pyrophosphate binding. Mg(2+) is bound by residues Asp451 and Asn478.

This sequence belongs to the TPP enzyme family. As to quaternary structure, homodimer. Requires Mg(2+) as cofactor. The cofactor is thiamine diphosphate. It depends on FAD as a cofactor.

It catalyses the reaction cyclohexan-1,2-dione + H2O = 6-oxohexanoate + H(+). Its function is as follows. Catalyzes the ring-opening cleavage of the alicyclic alcohol cyclohexane-1,2-dione. The sequence is that of Cyclohexane-1,2-dione hydrolase from Azoarcus sp.